The following is a 164-amino-acid chain: 6,7-dimethyl-8-ribityllumazine synthase (164 aa).

5-amino-6-(D-ribitylamino)uracil-binding positions include Phe24, 62 to 64 (SFE), and 86 to 88 (AVI). 91 to 92 (QT) serves as a coordination point for (2S)-2-hydroxy-3-oxobutyl phosphate. Residue His94 is the Proton donor of the active site. Phe119 is a binding site for 5-amino-6-(D-ribitylamino)uracil. Arg133 is a (2S)-2-hydroxy-3-oxobutyl phosphate binding site.

Belongs to the DMRL synthase family.

The enzyme catalyses (2S)-2-hydroxy-3-oxobutyl phosphate + 5-amino-6-(D-ribitylamino)uracil = 6,7-dimethyl-8-(1-D-ribityl)lumazine + phosphate + 2 H2O + H(+). Its pathway is cofactor biosynthesis; riboflavin biosynthesis; riboflavin from 2-hydroxy-3-oxobutyl phosphate and 5-amino-6-(D-ribitylamino)uracil: step 1/2. In terms of biological role, catalyzes the formation of 6,7-dimethyl-8-ribityllumazine by condensation of 5-amino-6-(D-ribitylamino)uracil with 3,4-dihydroxy-2-butanone 4-phosphate. This is the penultimate step in the biosynthesis of riboflavin. This chain is 6,7-dimethyl-8-ribityllumazine synthase, found in Synechocystis sp. (strain ATCC 27184 / PCC 6803 / Kazusa).